Here is an 852-residue protein sequence, read N- to C-terminus: Nucleolar protein 14 homolog (852 aa).

A disordered region spans residues 1 to 40 (MVAKGKKASADAVYAKKTTRSANPFDNSTAQSSKRGNPFD). Positions 20–35 (RSANPFDNSTAQSSKR) are enriched in polar residues. Residues 190 to 221 (IDEMIVEQKRRKNEIAKEKDEVYDLTEKLDAN) adopt a coiled-coil conformation. 2 disordered regions span residues 288 to 324 (RRMR…GEDD) and 338 to 410 (LGTH…KSAD). A compositionally biased stretch (basic and acidic residues) spans 344–353 (GKKEAVLKGD). Residues 354–381 (ENEDDDDKEGEEEEEEDSDEESDSEVDN) show a composition bias toward acidic residues. A coiled-coil region spans residues 774 to 851 (KMSKAKEERA…ELSRAKKKKK (78 aa)).

This sequence belongs to the NOP14 family. As to quaternary structure, component of the ribosomal small subunit (SSU) processome.

Its subcellular location is the nucleus. It localises to the nucleolus. Functionally, involved in nucleolar processing of pre-18S ribosomal RNA. Has a role in the nuclear export of 40S pre-ribosomal subunit to the cytoplasm. This Drosophila melanogaster (Fruit fly) protein is Nucleolar protein 14 homolog (l(3)07882).